A 291-amino-acid chain; its full sequence is uncharacterized protein (291 aa).

The 61-residue stretch at 2–62 (KEKEKLIIET…SMLNYYYDKT (61 aa)) folds into the HTH tetR-type domain. Residues 25–44 (SVQEIAKECKISKGAFYIYF) constitute a DNA-binding region (H-T-H motif).

This is an uncharacterized protein from Bacillus subtilis (strain 168).